The primary structure comprises 651 residues: Endo-1,4-beta-xylanase A (651 aa).

An N-terminal signal peptide occupies residues 1-30 (MKRKVKKMAAMATSIIMAIMIILHSIPVLA). One can recognise a GH11 domain in the interval 33 to 227 (IIYDNETGTH…SSGYANVYKN (195 aa)). The active-site Nucleophile is Glu-124. Glu-214 (proton donor) is an active-site residue. CBM6 domains follow at residues 250 to 370 (SIIE…FIFS), 387 to 507 (SIIQ…FVFT), and 527 to 647 (SNIQ…FVFS). Positions 253 and 255 each coordinate Ca(2+). D-xylotriose is bound at residue Thr-270. Residue Arg-275 coordinates Ca(2+). Repeat 1 spans residues 278-339 (GYIENGNTVT…SSTGSWNTYQ (62 aa)). The segment at 278 to 616 (GYIENGNTVT…GSTGSFDTYR (339 aa)) is 3 X 61 AA approximate repeats. Positions 279, 336, and 363 each coordinate D-xylotriose. Tyr-279, Asn-336, and Asn-363 together coordinate D-xylobiose. Asp-365 provides a ligand contact to Ca(2+). Residues 415 to 476 (GYIENGYSTT…PSTNSWDSYQ (62 aa)) form repeat 2. Positions 530, 532, and 552 each coordinate Ca(2+). Copy 3 of the repeat occupies 555–616 (GYIENGYSTT…GSTGSFDTYR (62 aa)). Tyr-556, Asp-613, and Asn-640 together coordinate D-xylotriose. Residue Asp-642 participates in Ca(2+) binding.

Belongs to the glycosyl hydrolase 11 (cellulase G) family.

The protein resides in the secreted. The catalysed reaction is Endohydrolysis of (1-&gt;4)-beta-D-xylosidic linkages in xylans.. It functions in the pathway glycan degradation; xylan degradation. Its function is as follows. Endoxylanase that degrades arabinoxylan and glucuronoxylan to xylobiose and xylotriose (in vitro). In Thermoclostridium stercorarium (Clostridium stercorarium), this protein is Endo-1,4-beta-xylanase A (xynA).